The sequence spans 147 residues: MASLRLFLLCLAGLVFVSEAGPAGAGESKCPLMVKVLDAVRGSPAVDVAVKVFKKTSEGSWEPFASGKTAESGELHGLTTDEKFVEGVYRVELDTKSYWKTLGISPFHEFADVVFTANDSGHRHYTIAALLSPYSYSTTAVVSNPQN.

The N-terminal stretch at 1 to 20 (MASLRLFLLCLAGLVFVSEA) is a signal peptide. Position 30 is a sulfocysteine (C30). K35 is an L-thyroxine binding site. Position 62 is a 4-carboxyglutamate (E62). S72 carries the post-translational modification Phosphoserine. Residue E74 participates in L-thyroxine binding. Residue N118 is glycosylated (N-linked (GlcNAc...) asparagine). S137 provides a ligand contact to L-thyroxine.

Belongs to the transthyretin family. Homotetramer. Dimer of dimers. In the homotetramer, subunits assemble around a central channel that can accommodate two ligand molecules. Interacts with RBP4. In terms of processing, sulfonation of the reactive cysteine Cys-30 enhances the stability of the native conformation of TTR, avoiding misassembly of the protein leading to amyloid formation. As to expression, detected in plasma (at protein level). Detected in liver.

It is found in the secreted. Functionally, thyroid hormone-binding protein. Probably transports thyroxine from the bloodstream to the brain. In Mus musculus (Mouse), this protein is Transthyretin (Ttr).